Consider the following 98-residue polypeptide: Large ribosomal subunit protein uL23 (98 aa).

It belongs to the universal ribosomal protein uL23 family. As to quaternary structure, part of the 50S ribosomal subunit. Contacts protein L29, and trigger factor when it is bound to the ribosome.

One of the early assembly proteins it binds 23S rRNA. One of the proteins that surrounds the polypeptide exit tunnel on the outside of the ribosome. Forms the main docking site for trigger factor binding to the ribosome. This chain is Large ribosomal subunit protein uL23, found in Streptococcus sanguinis (strain SK36).